The following is a 384-amino-acid chain: Ribosomal RNA large subunit methyltransferase G (384 aa).

The protein belongs to the methyltransferase superfamily. RlmG family.

The protein resides in the cytoplasm. It catalyses the reaction guanosine(1835) in 23S rRNA + S-adenosyl-L-methionine = N(2)-methylguanosine(1835) in 23S rRNA + S-adenosyl-L-homocysteine + H(+). Specifically methylates the guanine in position 1835 (m2G1835) of 23S rRNA. In Pseudoalteromonas atlantica (strain T6c / ATCC BAA-1087), this protein is Ribosomal RNA large subunit methyltransferase G.